The sequence spans 776 residues: Mitochondrial intermediate peptidase (776 aa).

A mitochondrion-targeting transit peptide spans 1-28; it reads MFVRFYKRLDRQYIQSQRRWILSSNKCL. Residues 48–71 form a disordered region; sequence DHWEESQAQNTSSEQDNKGKNSSY. Polar residues predominate over residues 53–71; sequence SQAQNTSSEQDNKGKNSSY. Position 567 (His-567) interacts with Zn(2+). Residue Glu-568 is part of the active site. Residues His-571 and His-574 each coordinate Zn(2+).

Belongs to the peptidase M3 family. Zn(2+) is required as a cofactor.

It localises to the mitochondrion matrix. It catalyses the reaction Release of an N-terminal octapeptide as second stage of processing of some proteins imported into the mitochondrion.. In terms of biological role, cleaves proteins, imported into the mitochondrion, to their mature size. While most mitochondrial precursor proteins are processed to the mature form in one step by mitochondrial processing peptidase (MPP), the sequential cleavage by MIP of an octapeptide after initial processing by MPP is a required step for a subgroup of nuclear-encoded precursor proteins destined for the matrix or the inner membrane. This is Mitochondrial intermediate peptidase (OCT1) from Eremothecium gossypii (strain ATCC 10895 / CBS 109.51 / FGSC 9923 / NRRL Y-1056) (Yeast).